The sequence spans 203 residues: MSRYTGPRWKQSRRLGLSLSGTGKELARRPYAPGDHGANNRRKISEYGQQLREKQKLRWMYGLNERQFQNLFLRAGKIKEGTHGDNFMILLETRLDNLVFRLGLASSRPQARQLVNHGHITVDGKRVDIPSYEVEPGQVIALRERSQNLAIVNEAIENTVSRPAYVTFDDTKKTGSLVRLPERGELEPEVDESLVVEYYNQKL.

One can recognise an S4 RNA-binding domain in the interval 93–156 (TRLDNLVFRL…QNLAIVNEAI (64 aa)).

This sequence belongs to the universal ribosomal protein uS4 family. In terms of assembly, part of the 30S ribosomal subunit. Contacts protein S5. The interaction surface between S4 and S5 is involved in control of translational fidelity.

One of the primary rRNA binding proteins, it binds directly to 16S rRNA where it nucleates assembly of the body of the 30S subunit. Functionally, with S5 and S12 plays an important role in translational accuracy. The sequence is that of Small ribosomal subunit protein uS4 from Lacticaseibacillus casei (strain BL23) (Lactobacillus casei).